A 230-amino-acid chain; its full sequence is Carbohydrate deacetylase (230 aa).

Positions 59 and 123 each coordinate Mg(2+).

It belongs to the YdjC deacetylase family. In terms of assembly, homodimer. Mg(2+) serves as cofactor.

Functionally, probably catalyzes the deacetylation of acetylated carbohydrates an important step in the degradation of oligosaccharides. This Oceanobacillus iheyensis (strain DSM 14371 / CIP 107618 / JCM 11309 / KCTC 3954 / HTE831) protein is Carbohydrate deacetylase.